A 635-amino-acid chain; its full sequence is MSGAIFAPLEGLSALDAASGHPLVCPLCHGQYERPCLLDCFHDFCTGCLRGRATDGRLSCPLCQHQTLVKGPSGLPPVDRLLQFLVDSSGDGSEAVRCANCDLECSQQDAETTYFCNTCGQPLCARCREETHRARMFARHDIVALGQRSRDVIQKCTLHSEPYIMFSTDKKSLLCIRCFRDMQGESRAHCVDLESAYVQGCERLEQAVLAVKALQTATKEAIALLQSMVEEVRHSAAEEEAAIHALFGSMQDRMAERKALLLQTVQSQYEEKDKAFKEQLTHLASLLPTLQVHLVICSSFLSLASKAEFLDLGYELMERLQGIVTRPHRLRPAQSSKIASDHRAEFARCLEPLLLLGPRREVSTVGGANTLSGGSSPMVLKTPSCPSPVGKMSGSPVQKPSPHRFISTKVLLAEGEDTPFTEHCRHYEDSYRGLQVEVQNLKDQVQELHRDLTKHHSLIKAEIMGDILRRSLLLDTQIASEYASLEGRRAIFQEIWEDSYQRVATQQEIYEAQLRDLLQLRQENAYLTIVTKQITPYIRSIARVKERLEPRFQVPVDEHAEHGQNMYDETPGRTDPGCTTEKRDKASEPNGSSWSLSSLPEGPSLKNQDHLRPKLEAGDEGWRAGSGSKGACYQA.

The segment at 25–64 (CPLCHGQYERPCLLDCFHDFCTGCLRGRATDGRLSCPLCQ) adopts an RING-type zinc-finger fold. A B box-type; atypical zinc finger spans residues 93-145 (SEAVRCANCDLECSQQDAETTYFCNTCGQPLCARCREETHRARMFARHDIVAL). 4 residues coordinate Zn(2+): cysteine 98, cysteine 101, cysteine 127, and histidine 132. The stretch at 422-460 (EHCRHYEDSYRGLQVEVQNLKDQVQELHRDLTKHHSLIK) forms a coiled coil. Positions 553–562 (QVPVDEHAEH) are enriched in basic and acidic residues. A disordered region spans residues 553–635 (QVPVDEHAEH…SGSKGACYQA (83 aa)). A compositionally biased stretch (polar residues) spans 589-598 (PNGSSWSLSS). The segment covering 607 to 622 (NQDHLRPKLEAGDEGW) has biased composition (basic and acidic residues).

In terms of assembly, interacts with the core-glycosylated, but not the fully glycosylated form of KCNH2/HERG. Interacts with DNAJA1 and HSPA8. Interacts (via the C-terminus) with HSPA1A; this interaction additively increases KCNH2 expression.

The protein resides in the cytoplasm. In terms of biological role, plays a role in cardiac repolarization possibly by stabilizing membrane expression of the potassium channel KCNH2/HERG, or by assisting its synthesis, folding or export from the endoplasmic reticulum, in a heat shock protein-dependent manner. This Mus musculus (Mouse) protein is RING finger protein 207 (Rnf207).